A 276-amino-acid polypeptide reads, in one-letter code: Formamidopyrimidine-DNA glycosylase (276 aa).

Proline 2 functions as the Schiff-base intermediate with DNA in the catalytic mechanism. The active-site Proton donor is glutamate 3. Lysine 58 (proton donor; for beta-elimination activity) is an active-site residue. Positions 94, 112, and 157 each coordinate DNA. The segment at 242–276 (FVYDRAGQPCRVCGTPIKQIVQGQRSTYYCPTCQR) adopts an FPG-type zinc-finger fold. Catalysis depends on arginine 266, which acts as the Proton donor; for delta-elimination activity.

This sequence belongs to the FPG family. In terms of assembly, monomer. It depends on Zn(2+) as a cofactor.

It catalyses the reaction Hydrolysis of DNA containing ring-opened 7-methylguanine residues, releasing 2,6-diamino-4-hydroxy-5-(N-methyl)formamidopyrimidine.. The catalysed reaction is 2'-deoxyribonucleotide-(2'-deoxyribose 5'-phosphate)-2'-deoxyribonucleotide-DNA = a 3'-end 2'-deoxyribonucleotide-(2,3-dehydro-2,3-deoxyribose 5'-phosphate)-DNA + a 5'-end 5'-phospho-2'-deoxyribonucleoside-DNA + H(+). Functionally, involved in base excision repair of DNA damaged by oxidation or by mutagenic agents. Acts as a DNA glycosylase that recognizes and removes damaged bases. Has a preference for oxidized purines, such as 7,8-dihydro-8-oxoguanine (8-oxoG). Has AP (apurinic/apyrimidinic) lyase activity and introduces nicks in the DNA strand. Cleaves the DNA backbone by beta-delta elimination to generate a single-strand break at the site of the removed base with both 3'- and 5'-phosphates. In Paraburkholderia phymatum (strain DSM 17167 / CIP 108236 / LMG 21445 / STM815) (Burkholderia phymatum), this protein is Formamidopyrimidine-DNA glycosylase.